The following is a 444-amino-acid chain: Exodeoxyribonuclease 7 large subunit (444 aa).

The protein belongs to the XseA family. Heterooligomer composed of large and small subunits.

It localises to the cytoplasm. It carries out the reaction Exonucleolytic cleavage in either 5'- to 3'- or 3'- to 5'-direction to yield nucleoside 5'-phosphates.. In terms of biological role, bidirectionally degrades single-stranded DNA into large acid-insoluble oligonucleotides, which are then degraded further into small acid-soluble oligonucleotides. This is Exodeoxyribonuclease 7 large subunit from Rickettsia conorii (strain ATCC VR-613 / Malish 7).